We begin with the raw amino-acid sequence, 275 residues long: 4-hydroxy-3-methylbut-2-enyl diphosphate reductase (275 aa).

Cysteine 12 contacts [4Fe-4S] cluster. (2E)-4-hydroxy-3-methylbut-2-enyl diphosphate-binding residues include histidine 40 and histidine 70. Residues histidine 40 and histidine 70 each contribute to the dimethylallyl diphosphate site. Isopentenyl diphosphate contacts are provided by histidine 40 and histidine 70. Cysteine 92 contacts [4Fe-4S] cluster. A (2E)-4-hydroxy-3-methylbut-2-enyl diphosphate-binding site is contributed by histidine 119. Residue histidine 119 participates in dimethylallyl diphosphate binding. Residue histidine 119 coordinates isopentenyl diphosphate. Glutamate 121 acts as the Proton donor in catalysis. Threonine 151 contributes to the (2E)-4-hydroxy-3-methylbut-2-enyl diphosphate binding site. Cysteine 181 is a binding site for [4Fe-4S] cluster. (2E)-4-hydroxy-3-methylbut-2-enyl diphosphate contacts are provided by serine 209, serine 210, asparagine 211, and serine 251. Serine 209, serine 210, asparagine 211, and serine 251 together coordinate dimethylallyl diphosphate. The isopentenyl diphosphate site is built by serine 209, serine 210, asparagine 211, and serine 251.

Belongs to the IspH family. Requires [4Fe-4S] cluster as cofactor.

It carries out the reaction isopentenyl diphosphate + 2 oxidized [2Fe-2S]-[ferredoxin] + H2O = (2E)-4-hydroxy-3-methylbut-2-enyl diphosphate + 2 reduced [2Fe-2S]-[ferredoxin] + 2 H(+). The catalysed reaction is dimethylallyl diphosphate + 2 oxidized [2Fe-2S]-[ferredoxin] + H2O = (2E)-4-hydroxy-3-methylbut-2-enyl diphosphate + 2 reduced [2Fe-2S]-[ferredoxin] + 2 H(+). The protein operates within isoprenoid biosynthesis; dimethylallyl diphosphate biosynthesis; dimethylallyl diphosphate from (2E)-4-hydroxy-3-methylbutenyl diphosphate: step 1/1. Its pathway is isoprenoid biosynthesis; isopentenyl diphosphate biosynthesis via DXP pathway; isopentenyl diphosphate from 1-deoxy-D-xylulose 5-phosphate: step 6/6. Functionally, catalyzes the conversion of 1-hydroxy-2-methyl-2-(E)-butenyl 4-diphosphate (HMBPP) into a mixture of isopentenyl diphosphate (IPP) and dimethylallyl diphosphate (DMAPP). Acts in the terminal step of the DOXP/MEP pathway for isoprenoid precursor biosynthesis. The sequence is that of 4-hydroxy-3-methylbut-2-enyl diphosphate reductase from Thermotoga sp. (strain RQ2).